Here is a 238-residue protein sequence, read N- to C-terminus: uncharacterized protein (238 aa).

7 helical membrane-spanning segments follow: residues 19–39 (FIYGMLLANPVWAHIFLLLGW), 64–84 (WSVIYFAAAVIFAIPALIYNW), 85–105 (QVLYFMFAMLPFVAVNIYFTK), 112–132 (LWNDLAGILIFALAGMGSYYF), 141–161 (ILWVAIYPTLFFIGTTLYVKS), 176–196 (VIFHLLCALIFVVSQQFILAL), and 218–238 (VGLIEFAITAVFFILLLVATL).

This sequence to B.subtilis YwiC.

It localises to the cell membrane. This is an uncharacterized protein from Haemophilus influenzae (strain ATCC 51907 / DSM 11121 / KW20 / Rd).